Here is a 121-residue protein sequence, read N- to C-terminus: Large ribosomal subunit protein eL18 (121 aa).

The protein belongs to the eukaryotic ribosomal protein eL18 family.

The chain is Large ribosomal subunit protein eL18 from Methanothermobacter thermautotrophicus (strain ATCC 29096 / DSM 1053 / JCM 10044 / NBRC 100330 / Delta H) (Methanobacterium thermoautotrophicum).